The sequence spans 381 residues: E3 ubiquitin-protein ligase RNF13 (381 aa).

The signal sequence occupies residues 1–34 (MLLSIGMLMLSATQVYTILTVQLFAFLNLLPVEA). The Lumenal portion of the chain corresponds to 35 to 182 (DILAYNFENA…VPEFSLPLEY (148 aa)). The PA domain occupies 65-160 (KGFLINSKPE…GESSANSLKD (96 aa)). N-linked (GlcNAc...) asparagine glycosylation is present at asparagine 88. A helical transmembrane segment spans residues 183-203 (YLIPFLIIVGICLILIVIFMI). Residues 204 to 381 (TKFVQDRHRA…ERDYNIANTV (178 aa)) are Cytoplasmic-facing. The segment at 240–282 (CAICLDEYEDGDKLRILPCSHAYHCKCVDPWLTKTKKTCPVCK) adopts an RING-type; atypical zinc-finger fold. The interval 285-381 (VVPSQGDSDS…ERDYNIANTV (97 aa)) is disordered. 2 stretches are compositionally biased toward acidic residues: residues 292–304 (SDSD…EENE) and 339–357 (SDYE…AENE).

Interacts with ERN1. Post-translationally, autoubiquitinated. As to expression, widely expressed (at protein level). In normal pancreas, expressed in islets, but not in ducts, nor in acini (at protein level).

The protein localises to the endoplasmic reticulum membrane. The protein resides in the late endosome membrane. Its subcellular location is the lysosome membrane. It is found in the nucleus inner membrane. The catalysed reaction is S-ubiquitinyl-[E2 ubiquitin-conjugating enzyme]-L-cysteine + [acceptor protein]-L-lysine = [E2 ubiquitin-conjugating enzyme]-L-cysteine + N(6)-ubiquitinyl-[acceptor protein]-L-lysine.. The protein operates within protein modification; protein ubiquitination. Its function is as follows. E3 ubiquitin-protein ligase that regulates cell proliferation. Involved in apoptosis regulation. Mediates ER stress-induced activation of JNK signaling pathway and apoptosis by promoting ERN1 activation and splicing of XBP1 mRNA. Also involved in protein trafficking and localization. This is E3 ubiquitin-protein ligase RNF13 from Homo sapiens (Human).